The primary structure comprises 165 residues: Thiol peroxidase (165 aa).

The 148-residue stretch at 18–165 folds into the Thioredoxin domain; that stretch reads PAVGSPAPAF…YEAALAALGA (148 aa). C60 functions as the Cysteine sulfenic acid (-SOH) intermediate in the catalytic mechanism. A disulfide bond links C60 and C93.

The protein belongs to the peroxiredoxin family. Tpx subfamily. In terms of assembly, homodimer.

It catalyses the reaction a hydroperoxide + [thioredoxin]-dithiol = an alcohol + [thioredoxin]-disulfide + H2O. Functionally, thiol-specific peroxidase that catalyzes the reduction of hydrogen peroxide and organic hydroperoxides to water and alcohols, respectively. Plays a role in cell protection against oxidative stress by detoxifying peroxides. The protein is Thiol peroxidase of Mycobacterium bovis (strain ATCC BAA-935 / AF2122/97).